The chain runs to 209 residues: Thiamine-phosphate synthase 1 (209 aa).

Residues Q39–K43 and N74 contribute to the 4-amino-2-methyl-5-(diphosphooxymethyl)pyrimidine site. The Mg(2+) site is built by D75 and D94. Residue S112 participates in 4-amino-2-methyl-5-(diphosphooxymethyl)pyrimidine binding. A 2-[(2R,5Z)-2-carboxy-4-methylthiazol-5(2H)-ylidene]ethyl phosphate-binding site is contributed by T138 to S140. Residue K141 participates in 4-amino-2-methyl-5-(diphosphooxymethyl)pyrimidine binding. 2-[(2R,5Z)-2-carboxy-4-methylthiazol-5(2H)-ylidene]ethyl phosphate-binding positions include G170 and I190–S191.

This sequence belongs to the thiamine-phosphate synthase family. It depends on Mg(2+) as a cofactor.

The catalysed reaction is 2-[(2R,5Z)-2-carboxy-4-methylthiazol-5(2H)-ylidene]ethyl phosphate + 4-amino-2-methyl-5-(diphosphooxymethyl)pyrimidine + 2 H(+) = thiamine phosphate + CO2 + diphosphate. It carries out the reaction 2-(2-carboxy-4-methylthiazol-5-yl)ethyl phosphate + 4-amino-2-methyl-5-(diphosphooxymethyl)pyrimidine + 2 H(+) = thiamine phosphate + CO2 + diphosphate. The enzyme catalyses 4-methyl-5-(2-phosphooxyethyl)-thiazole + 4-amino-2-methyl-5-(diphosphooxymethyl)pyrimidine + H(+) = thiamine phosphate + diphosphate. Its pathway is cofactor biosynthesis; thiamine diphosphate biosynthesis; thiamine phosphate from 4-amino-2-methyl-5-diphosphomethylpyrimidine and 4-methyl-5-(2-phosphoethyl)-thiazole: step 1/1. Condenses 4-methyl-5-(beta-hydroxyethyl)thiazole monophosphate (THZ-P) and 2-methyl-4-amino-5-hydroxymethyl pyrimidine pyrophosphate (HMP-PP) to form thiamine monophosphate (TMP). The protein is Thiamine-phosphate synthase 1 of Streptococcus pneumoniae serotype 4 (strain ATCC BAA-334 / TIGR4).